The chain runs to 398 residues: Acetate kinase (398 aa).

Position 7 (Asn-7) interacts with Mg(2+). Residue Lys-14 coordinates ATP. Arg-92 provides a ligand contact to substrate. The active-site Proton donor/acceptor is Asp-149. ATP contacts are provided by residues 209–213 (HLGNG), 284–286 (DFR), and 332–336 (GVGEN). Glu-385 contacts Mg(2+).

The protein belongs to the acetokinase family. In terms of assembly, homodimer. The cofactor is Mg(2+). It depends on Mn(2+) as a cofactor.

Its subcellular location is the cytoplasm. It catalyses the reaction acetate + ATP = acetyl phosphate + ADP. It participates in metabolic intermediate biosynthesis; acetyl-CoA biosynthesis; acetyl-CoA from acetate: step 1/2. In terms of biological role, catalyzes the formation of acetyl phosphate from acetate and ATP. Can also catalyze the reverse reaction. The chain is Acetate kinase from Clostridioides difficile (strain 630) (Peptoclostridium difficile).